Reading from the N-terminus, the 145-residue chain is Transcription antitermination protein NusB (145 aa).

The protein belongs to the NusB family.

Functionally, involved in transcription antitermination. Required for transcription of ribosomal RNA (rRNA) genes. Binds specifically to the boxA antiterminator sequence of the ribosomal RNA (rrn) operons. The polypeptide is Transcription antitermination protein NusB (Aromatoleum aromaticum (strain DSM 19018 / LMG 30748 / EbN1) (Azoarcus sp. (strain EbN1))).